Consider the following 35-residue polypeptide: Photosystem II reaction center protein T (35 aa).

Residues 3–23 (ALVYTFLLVSTLGIIFFAIFF) form a helical membrane-spanning segment.

Belongs to the PsbT family. As to quaternary structure, PSII is composed of 1 copy each of membrane proteins PsbA, PsbB, PsbC, PsbD, PsbE, PsbF, PsbH, PsbI, PsbJ, PsbK, PsbL, PsbM, PsbT, PsbY, PsbZ, Psb30/Ycf12, at least 3 peripheral proteins of the oxygen-evolving complex and a large number of cofactors. It forms dimeric complexes.

It localises to the plastid. The protein resides in the chloroplast thylakoid membrane. Found at the monomer-monomer interface of the photosystem II (PS II) dimer, plays a role in assembly and dimerization of PSII. PSII is a light-driven water plastoquinone oxidoreductase, using light energy to abstract electrons from H(2)O, generating a proton gradient subsequently used for ATP formation. The sequence is that of Photosystem II reaction center protein T from Suaeda aralocaspica (Seablite).